Consider the following 316-residue polypeptide: tRNA dimethylallyltransferase (316 aa).

12-19 contacts ATP; that stretch reads GPTASGKT. A substrate-binding site is contributed by 14 to 19; sequence TASGKT. Interaction with substrate tRNA regions lie at residues 37–40 and 161–165; these read DSAL and QRILR.

The protein belongs to the IPP transferase family. In terms of assembly, monomer. It depends on Mg(2+) as a cofactor.

The enzyme catalyses adenosine(37) in tRNA + dimethylallyl diphosphate = N(6)-dimethylallyladenosine(37) in tRNA + diphosphate. In terms of biological role, catalyzes the transfer of a dimethylallyl group onto the adenine at position 37 in tRNAs that read codons beginning with uridine, leading to the formation of N6-(dimethylallyl)adenosine (i(6)A). The chain is tRNA dimethylallyltransferase from Idiomarina loihiensis (strain ATCC BAA-735 / DSM 15497 / L2-TR).